The sequence spans 238 residues: Partner of Y14 and mago (238 aa).

Positions 1–183 (MTTYATDSQG…GADGHSDLSK (183 aa)) are disordered. Basic and acidic residues-rich tracts occupy residues 65 to 77 (QKAR…EQRK) and 123 to 133 (LEQKQKEEQKA). The span at 136-155 (RQQAQDQRNSKQQQSQNQSK) shows a compositional bias: low complexity. Residues 176 to 233 (DGHSDLSKKLRKLRKKIREIEVIEERLRASDGPRPDKDQIEKAKRKAEILKEIEELER) adopt a coiled-coil conformation.

This sequence belongs to the pym family. As to quaternary structure, interacts (via N-terminus) with mago and tsu/Y14; the interaction is direct.

Its subcellular location is the cytoplasm. It localises to the nucleus. Its function is as follows. Regulator of the exon junction complex (EJC), a multiprotein complex that associates immediately upstream of the exon-exon junction on mRNAs and serves as a positional landmarks for the intron exon structure of genes and directs post-transcriptional processes in the cytoplasm such as mRNA export, nonsense-mediated mRNA decay (NMD) or translation. This is Partner of Y14 and mago from Culex quinquefasciatus (Southern house mosquito).